The following is a 768-amino-acid chain: P-selectin (768 aa).

An N-terminal signal peptide occupies residues 1 to 41 (MAGCPKGSWKPRLRSVVLGAAQLIWLSALISELVNRKKVAT). Residues 42–709 (WTYNYSTKAY…QAGTLTIQEA (668 aa)) are Extracellular-facing. N-linked (GlcNAc...) asparagine glycans are attached at residues asparagine 45, asparagine 54, and asparagine 107. In terms of domain architecture, C-type lectin spans 58 to 158 (AFCKRHFTDL…PCFKRKRALC (101 aa)). Disulfide bonds link cysteine 60–cysteine 158, cysteine 131–cysteine 150, cysteine 168–cysteine 183, cysteine 185–cysteine 194, cysteine 200–cysteine 244, cysteine 230–cysteine 257, cysteine 262–cysteine 306, cysteine 292–cysteine 319, cysteine 324–cysteine 368, cysteine 354–cysteine 381, cysteine 386–cysteine 430, cysteine 416–cysteine 443, cysteine 448–cysteine 492, cysteine 478–cysteine 505, cysteine 510–cysteine 554, cysteine 540–cysteine 567, cysteine 580–cysteine 624, cysteine 610–cysteine 637, cysteine 642–cysteine 686, and cysteine 672–cysteine 699. Ca(2+) is bound by residues glutamate 121, asparagine 123, and asparagine 124. Asparagine 123 serves as a coordination point for a carbohydrate. 2 residues coordinate a carbohydrate: glutamate 133 and asparagine 146. Asparagine 146 and aspartate 147 together coordinate Ca(2+). The 37-residue stretch at 159 to 195 (YTASCQDMSCNSQGERIETIGSYTCSCYPGFYGPECE) folds into the EGF-like domain. Sushi domains are found at residues 198 to 259 (QECG…QCKA), 260 to 321 (VQCQ…TCEA), 322 to 383 (IACE…VCEA), 384 to 445 (LQCQ…ECQA), 446 to 507 (VSCT…MCEA), 508 to 569 (IKCP…TCKG), 578 to 639 (VRCP…VCRA), and 640 to 701 (VKCS…TCQA). Residue asparagine 212 is glycosylated (N-linked (GlcNAc...) asparagine). N-linked (GlcNAc...) asparagine glycosylation is present at asparagine 347. An N-linked (GlcNAc...) asparagine glycan is attached at asparagine 456. An N-linked (GlcNAc...) asparagine glycan is attached at asparagine 603. N-linked (GlcNAc...) asparagine glycosylation is found at asparagine 654, asparagine 661, and asparagine 679. A helical transmembrane segment spans residues 710–733 (LTYLGGALASTSGLAVGGTLLALL). The Cytoplasmic segment spans residues 734-768 (RKRLRKKDDGKCPLNPHSHLGTYGVFTNAAYDPTP). Residue cysteine 745 is the site of S-palmitoyl cysteine; alternate attachment. Cysteine 745 is lipidated: S-stearoyl cysteine; alternate. The short motif at 756-759 (YGVF) is the Endocytosis signal element. Residues 759–768 (FTNAAYDPTP) form an interaction with SNX17 region.

This sequence belongs to the selectin/LECAM family. In terms of assembly, interacts with SNX17. Interacts with SELPLG/PSGL1 and PODXL2 and mediates neutrophil adhesion and leukocyte rolling. This interaction requires the sialyl-Lewis X epitope of SELPLG and PODXL2, and specific tyrosine sulfation on SELPLG. Interacts (via C-type lectin domain) with alpha-IIb/beta3 integrin ITGA2B:ITGB3 and alpha-V/beta-3 integrin ITGAV:ITGB3. Interacts with alpha5/beta1 integrin ITGA5:ITGB1 and alpha4/beta1 integrin ITGA4:ITGB. Not detected in the absence of exposure to lipopolysaccharide (LPS). Detected only after exposure to lipopolysaccharide (LPS) in the tissues examined: spleen, lung, brain, liver, heart, kidney, thymus and small intestine.

The protein resides in the cell membrane. Ca(2+)-dependent receptor for myeloid cells that binds to carbohydrates on neutrophils and monocytes. Mediates the interaction of activated endothelial cells or platelets with leukocytes. The ligand recognized is sialyl-Lewis X. Mediates rapid rolling of leukocyte rolling over vascular surfaces during the initial steps in inflammation through interaction with SELPLG. Mediates cell-cell interactions and cell adhesion via the interaction with integrin alpha-IIb/beta3 (ITGA2B:ITGB3) and integrin alpha-V/beta-3 (ITGAV:ITGB3). The chain is P-selectin (Selp) from Rattus norvegicus (Rat).